A 285-amino-acid polypeptide reads, in one-letter code: Bifunctional protein FolD (285 aa).

NADP(+) is bound by residues 165–167 (GRS) and serine 190.

It belongs to the tetrahydrofolate dehydrogenase/cyclohydrolase family. In terms of assembly, homodimer.

The enzyme catalyses (6R)-5,10-methylene-5,6,7,8-tetrahydrofolate + NADP(+) = (6R)-5,10-methenyltetrahydrofolate + NADPH. The catalysed reaction is (6R)-5,10-methenyltetrahydrofolate + H2O = (6R)-10-formyltetrahydrofolate + H(+). The protein operates within one-carbon metabolism; tetrahydrofolate interconversion. In terms of biological role, catalyzes the oxidation of 5,10-methylenetetrahydrofolate to 5,10-methenyltetrahydrofolate and then the hydrolysis of 5,10-methenyltetrahydrofolate to 10-formyltetrahydrofolate. In Burkholderia mallei (strain NCTC 10247), this protein is Bifunctional protein FolD.